A 458-amino-acid chain; its full sequence is Probable alpha-L-glutamate ligase (458 aa).

Residues 1-162 are unknown; sequence MSDNKFIIGS…YGVKTAKKSG (162 aa). The alpha-L-glutamate ligase stretch occupies residues 163-458; the sequence is LKIGLLASNP…IEKKLGWKAD (296 aa). The ATP-grasp domain maps to 267–450; sequence LQLLQKNNLD…IAGAMIESIE (184 aa). ATP is bound by residues Lys304, 341–342, Asp350, and 374–376; these read EF and RAN. Residues Asp411, Glu423, and Asn425 each coordinate Mg(2+). The Mn(2+) site is built by Asp411, Glu423, and Asn425.

In the C-terminal section; belongs to the RimK family. Mg(2+) serves as cofactor. The cofactor is Mn(2+).

In Shewanella pealeana (strain ATCC 700345 / ANG-SQ1), this protein is Probable alpha-L-glutamate ligase.